Here is an 849-residue protein sequence, read N- to C-terminus: Protein translocase subunit SecA (849 aa).

ATP is bound by residues glutamine 85, 103–107 (GEGKT), and aspartate 493. 4 residues coordinate Zn(2+): cysteine 832, cysteine 834, cysteine 843, and histidine 844.

This sequence belongs to the SecA family. Monomer and homodimer. Part of the essential Sec protein translocation apparatus which comprises SecA, SecYEG and auxiliary proteins SecDF. Other proteins may also be involved. Requires Zn(2+) as cofactor.

It is found in the cell membrane. The protein localises to the cytoplasm. The catalysed reaction is ATP + H2O + cellular proteinSide 1 = ADP + phosphate + cellular proteinSide 2.. In terms of biological role, part of the Sec protein translocase complex. Interacts with the SecYEG preprotein conducting channel. Has a central role in coupling the hydrolysis of ATP to the transfer of proteins into and across the cell membrane, serving as an ATP-driven molecular motor driving the stepwise translocation of polypeptide chains across the membrane. The sequence is that of Protein translocase subunit SecA from Streptococcus thermophilus (strain ATCC BAA-491 / LMD-9).